We begin with the raw amino-acid sequence, 114 residues long: T cell receptor alpha variable 12-3 (114 aa).

The N-terminal stretch at 1–21 (MMKSLRVLLVILWLQLSWVWS) is a signal peptide. The Ig-like domain maps to 24–114 (KEVEQDPGPL…DSATYLCAMS (91 aa)). Asn-44 carries an N-linked (GlcNAc...) asparagine glycan. The cysteines at positions 45 and 111 are disulfide-linked.

Alpha-beta TR is a heterodimer composed of an alpha and beta chain; disulfide-linked. The alpha-beta TR is associated with the transmembrane signaling CD3 coreceptor proteins to form the TR-CD3 (TcR or TCR). The assembly of alpha-beta TR heterodimers with CD3 occurs in the endoplasmic reticulum where a single alpha-beta TR heterodimer associates with one CD3D-CD3E heterodimer, one CD3G-CD3E heterodimer and one CD247 homodimer forming a stable octameric structure. CD3D-CD3E and CD3G-CD3E heterodimers preferentially associate with TR alpha and TR beta chains, respectively. The association of the CD247 homodimer is the last step of TcR assembly in the endoplasmic reticulum and is required for transport to the cell surface.

The protein localises to the cell membrane. V region of the variable domain of T cell receptor (TR) alpha chain that participates in the antigen recognition. Alpha-beta T cell receptors are antigen specific receptors which are essential to the immune response and are present on the cell surface of T lymphocytes. Recognize peptide-major histocompatibility (MH) (pMH) complexes that are displayed by antigen presenting cells (APC), a prerequisite for efficient T cell adaptive immunity against pathogens. Binding of alpha-beta TR to pMH complex initiates TR-CD3 clustering on the cell surface and intracellular activation of LCK that phosphorylates the ITAM motifs of CD3G, CD3D, CD3E and CD247 enabling the recruitment of ZAP70. In turn ZAP70 phosphorylates LAT, which recruits numerous signaling molecules to form the LAT signalosome. The LAT signalosome propagates signal branching to three major signaling pathways, the calcium, the mitogen-activated protein kinase (MAPK) kinase and the nuclear factor NF-kappa-B (NF-kB) pathways, leading to the mobilization of transcription factors that are critical for gene expression and essential for T cell growth and differentiation. The T cell repertoire is generated in the thymus, by V-(D)-J rearrangement. This repertoire is then shaped by intrathymic selection events to generate a peripheral T cell pool of self-MH restricted, non-autoaggressive T cells. Post-thymic interaction of alpha-beta TR with the pMH complexes shapes TR structural and functional avidity. In Homo sapiens (Human), this protein is T cell receptor alpha variable 12-3.